Consider the following 512-residue polypeptide: Lysine--tRNA ligase (512 aa).

2 residues coordinate Mg(2+): Glu408 and Glu415.

It belongs to the class-II aminoacyl-tRNA synthetase family. In terms of assembly, homodimer. Mg(2+) serves as cofactor.

It localises to the cytoplasm. The catalysed reaction is tRNA(Lys) + L-lysine + ATP = L-lysyl-tRNA(Lys) + AMP + diphosphate. This Prochlorococcus marinus (strain MIT 9312) protein is Lysine--tRNA ligase.